The following is a 110-amino-acid chain: Protein NATD1 (110 aa).

Residues Glu19–Gln109 form the N-acetyltransferase domain.

This sequence belongs to the NATD1 family. Expressed in the heart, testis, kidney and lung.

This is Protein NATD1 (Natd1) from Mus musculus (Mouse).